We begin with the raw amino-acid sequence, 284 residues long: Acetyl-coenzyme A carboxylase carboxyl transferase subunit beta (284 aa).

The CoA carboxyltransferase N-terminal domain maps to 31–284 (FWTYCKGCDS…LYQILAMHKK (254 aa)). Positions 35, 38, 54, and 57 each coordinate Zn(2+). A C4-type zinc finger spans residues 35–57 (CKGCDSHVFRKDIEENSFVCPKC).

The protein belongs to the AccD/PCCB family. Acetyl-CoA carboxylase is a heterohexamer composed of biotin carboxyl carrier protein (AccB), biotin carboxylase (AccC) and two subunits each of ACCase subunit alpha (AccA) and ACCase subunit beta (AccD). Zn(2+) is required as a cofactor.

It localises to the cytoplasm. It catalyses the reaction N(6)-carboxybiotinyl-L-lysyl-[protein] + acetyl-CoA = N(6)-biotinyl-L-lysyl-[protein] + malonyl-CoA. Its pathway is lipid metabolism; malonyl-CoA biosynthesis; malonyl-CoA from acetyl-CoA: step 1/1. Component of the acetyl coenzyme A carboxylase (ACC) complex. Biotin carboxylase (BC) catalyzes the carboxylation of biotin on its carrier protein (BCCP) and then the CO(2) group is transferred by the transcarboxylase to acetyl-CoA to form malonyl-CoA. This chain is Acetyl-coenzyme A carboxylase carboxyl transferase subunit beta, found in Clostridioides difficile (strain 630) (Peptoclostridium difficile).